The chain runs to 360 residues: Phospho-N-acetylmuramoyl-pentapeptide-transferase (360 aa).

10 consecutive transmembrane segments (helical) span residues 25–45 (RGILGVLTALCLSLFLGPWMI), 73–93 (TMGGALILSSIGISTLLWADL), 97–117 (YVWVVLLVTLLFGAIGWVDDY), 142–162 (VGAAIFLYTTAPSAVETTLII), 168–188 (ASIPLGIGFVVLTYFVIVGSS), 199–219 (GLAIMPTVMVGGALGIFCYLS), 236–256 (AGELIVFCGALIGAGLGFLWF), 263–283 (VFMGDVGALALGAALGTIAVI), 288–308 (IVLFIMGGVFVMETLSVVIQV), and 338–358 (VIVRFWIITVILVLVGLATLK).

Belongs to the glycosyltransferase 4 family. MraY subfamily. It depends on Mg(2+) as a cofactor.

Its subcellular location is the cell inner membrane. The catalysed reaction is UDP-N-acetyl-alpha-D-muramoyl-L-alanyl-gamma-D-glutamyl-meso-2,6-diaminopimeloyl-D-alanyl-D-alanine + di-trans,octa-cis-undecaprenyl phosphate = di-trans,octa-cis-undecaprenyl diphospho-N-acetyl-alpha-D-muramoyl-L-alanyl-D-glutamyl-meso-2,6-diaminopimeloyl-D-alanyl-D-alanine + UMP. The protein operates within cell wall biogenesis; peptidoglycan biosynthesis. Functionally, catalyzes the initial step of the lipid cycle reactions in the biosynthesis of the cell wall peptidoglycan: transfers peptidoglycan precursor phospho-MurNAc-pentapeptide from UDP-MurNAc-pentapeptide onto the lipid carrier undecaprenyl phosphate, yielding undecaprenyl-pyrophosphoryl-MurNAc-pentapeptide, known as lipid I. The polypeptide is Phospho-N-acetylmuramoyl-pentapeptide-transferase (Pseudomonas fluorescens (strain SBW25)).